The sequence spans 916 residues: Alanine--tRNA ligase (916 aa).

H611, H615, C714, and H718 together coordinate Zn(2+).

It belongs to the class-II aminoacyl-tRNA synthetase family. Requires Zn(2+) as cofactor.

It is found in the cytoplasm. The enzyme catalyses tRNA(Ala) + L-alanine + ATP = L-alanyl-tRNA(Ala) + AMP + diphosphate. Catalyzes the attachment of alanine to tRNA(Ala) in a two-step reaction: alanine is first activated by ATP to form Ala-AMP and then transferred to the acceptor end of tRNA(Ala). Also edits incorrectly charged Ser-tRNA(Ala) and Gly-tRNA(Ala) via its editing domain. In Methanospirillum hungatei JF-1 (strain ATCC 27890 / DSM 864 / NBRC 100397 / JF-1), this protein is Alanine--tRNA ligase.